Reading from the N-terminus, the 382-residue chain is (R,R)-butanediol dehydrogenase (382 aa).

Residue cysteine 39 participates in Zn(2+) binding. Serine 63 carries the post-translational modification Phosphoserine. Zn(2+)-binding residues include histidine 73, cysteine 103, cysteine 120, cysteine 123, cysteine 131, and glutamate 173.

The protein belongs to the zinc-containing alcohol dehydrogenase family. Homodimer. Zn(2+) is required as a cofactor.

The protein resides in the cytoplasm. The catalysed reaction is (R,R)-butane-2,3-diol + NAD(+) = (R)-acetoin + NADH + H(+). In terms of biological role, NAD-dependent (R,R)-butanediol dehydrogenase which catalyzes oxidation of (R,R)-butane-2,3-diol to (3R)-acetoin, of meso-butanediol to (3S)-acetoin, and reduction of acetoin. Allows the use of 2,3-butanediol as an aerobic carbon source. The sequence is that of (R,R)-butanediol dehydrogenase (BDH1) from Saccharomyces cerevisiae (strain ATCC 204508 / S288c) (Baker's yeast).